Here is a 307-residue protein sequence, read N- to C-terminus: HPr kinase/phosphorylase (307 aa).

Residues His-136 and Lys-157 contribute to the active site. 151–158 (GESGIGKS) is an ATP binding site. A Mg(2+)-binding site is contributed by Ser-158. Catalysis depends on Asp-175, which acts as the Proton acceptor; for phosphorylation activity. Proton donor; for dephosphorylation activity. The segment at 198-207 (LEVRGMGIID) is important for the catalytic mechanism of both phosphorylation and dephosphorylation. Mg(2+) is bound at residue Glu-199. Arg-240 is an active-site residue. Positions 261–266 (PIRPGR) are important for the catalytic mechanism of dephosphorylation.

The protein belongs to the HPrK/P family. In terms of assembly, homohexamer. Mg(2+) is required as a cofactor.

It catalyses the reaction [HPr protein]-L-serine + ATP = [HPr protein]-O-phospho-L-serine + ADP + H(+). It carries out the reaction [HPr protein]-O-phospho-L-serine + phosphate + H(+) = [HPr protein]-L-serine + diphosphate. Its function is as follows. Catalyzes the ATP- as well as the pyrophosphate-dependent phosphorylation of a specific serine residue in HPr, a phosphocarrier protein of the phosphoenolpyruvate-dependent sugar phosphotransferase system (PTS). HprK/P also catalyzes the pyrophosphate-producing, inorganic phosphate-dependent dephosphorylation (phosphorolysis) of seryl-phosphorylated HPr (P-Ser-HPr). The two antagonistic activities of HprK/P are regulated by several intracellular metabolites, which change their concentration in response to the absence or presence of rapidly metabolisable carbon sources (glucose, fructose, etc.) in the growth medium. Therefore, by controlling the phosphorylation state of HPr, HPrK/P is a sensor enzyme that plays a major role in the regulation of carbon metabolism and sugar transport: it mediates carbon catabolite repression (CCR), and regulates PTS-catalyzed carbohydrate uptake and inducer exclusion. This is HPr kinase/phosphorylase from Clostridium perfringens (strain 13 / Type A).